A 193-amino-acid chain; its full sequence is 7-methyl-GTP pyrophosphatase (193 aa).

Aspartate 70 (proton acceptor) is an active-site residue.

It belongs to the Maf family. YceF subfamily. A divalent metal cation serves as cofactor.

It localises to the cytoplasm. The enzyme catalyses N(7)-methyl-GTP + H2O = N(7)-methyl-GMP + diphosphate + H(+). Its function is as follows. Nucleoside triphosphate pyrophosphatase that hydrolyzes 7-methyl-GTP (m(7)GTP). May have a dual role in cell division arrest and in preventing the incorporation of modified nucleotides into cellular nucleic acids. This Vibrio cholerae serotype O1 (strain ATCC 39315 / El Tor Inaba N16961) protein is 7-methyl-GTP pyrophosphatase.